An 813-amino-acid chain; its full sequence is Tax1-binding protein 1 homolog (813 aa).

S124, S138, and S225 each carry phosphoserine. The stretch at 144 to 627 (TTKAGLLELK…LENQAERKME (484 aa)) forms a coiled coil. The tract at residues 320–420 (EEIGRLQLCL…ELKLNAMKKD (101 aa)) is oligomerization. The span at 489–502 (DASVNTDPATSAST) shows a compositional bias: polar residues. Residues 489 to 508 (DASVNTDPATSASTVDVKPS) are disordered. Phosphoserine is present on residues S617, S633, and S690. The interval 663–738 (YASQETRDGA…DPPSQHLRGH (76 aa)) is disordered. 2 UBZ1-type zinc fingers span residues 751-777 (HKKCPLCELMFPPNYDQSKFEEHVESH) and 778-804 (WKVCPMCSEQFPPDYDQQVFERHVQTH). Residues C754, C757, H773, H777, C781, C784, H800, and H804 each contribute to the Zn(2+) site.

In terms of assembly, homooligomer. Interacts with TNFAIP3. Interacts with STARD13. Interacts with MYO6. Interacts with TOM1; the interaction is indirect and is mediated by MYO6, which acts as a bridge between TOM1 and TAX1BP1. Interacts with MAVS; this interaction induces MAVS polyubiquitination. Interacts with TNIP1. Interacts with TRAF6; this interaction mediates deubiquitination of TRAF6 and inhibition of NF-kappa-B activation. Interacts with RIPK1; this interaction negatively regulates RIPK1 ubiquitination. Interacts with NBR1. Interacts with TBK1. Interacts with RB1CC1. Interacts with SQSTM1. Interacts with AZI2.

It localises to the cytoplasm. The protein resides in the mitochondrion. Its subcellular location is the preautophagosomal structure. The protein localises to the cytoplasmic vesicle. It is found in the autophagosome. Ubiquitin-binding adapter that participates in inflammatory, antiviral and innate immune processes as well as selective autophagy regulation. Plays a key role in the negative regulation of NF-kappa-B and IRF3 signalings by acting as an adapter for the ubiquitin-editing enzyme A20/TNFAIP3 to bind and inactivate its substrates. Disrupts the interactions between the E3 ubiquitin ligase TRAF3 and TBK1/IKBKE to attenuate 'Lys63'-linked polyubiquitination of TBK1 and thereby IFN-beta production. Also recruits A20/TNFAIP3 to ubiquitinated signaling proteins TRAF6 and RIPK1, leading to their deubiquitination and disruption of IL-1 and TNF-induced NF-kappa-B signaling pathways. Inhibits virus-induced apoptosis by inducing the 'Lys-48'-linked polyubiquitination and degradation of MAVS via recruitment of the E3 ligase ITCH, thereby attenuating MAVS-mediated apoptosis signaling. As a macroautophagy/autophagy receptor, facilitates the xenophagic clearance of pathogenic bacteria such as Salmonella typhimurium and Mycobacterium tuberculosis. Upon NBR1 recruitment to the SQSTM1-ubiquitin condensates, acts as the major recruiter of RB1CC1 to these ubiquitin condensates to promote their autophagic degradation. The polypeptide is Tax1-binding protein 1 homolog (TAX1BP1) (Pongo abelii (Sumatran orangutan)).